The following is a 563-amino-acid chain: Formate--tetrahydrofolate ligase (563 aa).

65 to 72 (TPLGEGKT) contacts ATP.

Belongs to the formate--tetrahydrofolate ligase family.

It carries out the reaction (6S)-5,6,7,8-tetrahydrofolate + formate + ATP = (6R)-10-formyltetrahydrofolate + ADP + phosphate. It participates in one-carbon metabolism; tetrahydrofolate interconversion. The protein is Formate--tetrahydrofolate ligase of Cutibacterium acnes (strain DSM 16379 / KPA171202) (Propionibacterium acnes).